Reading from the N-terminus, the 231-residue chain is Extracellular deoxyribonuclease (231 aa).

The N-terminal stretch at Met-1 to Ala-20 is a signal peptide.

It belongs to the EndA/NucM nuclease family.

It localises to the secreted. The protein is Extracellular deoxyribonuclease (dns) of Vibrio cholerae serotype O1 (strain ATCC 39315 / El Tor Inaba N16961).